Reading from the N-terminus, the 327-residue chain is tRNA pseudouridine synthase B (327 aa).

Catalysis depends on D69, which acts as the Nucleophile. Positions 97, 201, and 222 each coordinate substrate.

This sequence belongs to the pseudouridine synthase TruB family. Type 1 subfamily.

The enzyme catalyses uridine(55) in tRNA = pseudouridine(55) in tRNA. Responsible for synthesis of pseudouridine from uracil-55 in the psi GC loop of transfer RNAs. This is tRNA pseudouridine synthase B from Wigglesworthia glossinidia brevipalpis.